A 323-amino-acid chain; its full sequence is Lipoyl synthase (323 aa).

Residues Cys-69, Cys-74, Cys-80, Cys-95, Cys-99, Cys-102, and Ser-310 each contribute to the [4Fe-4S] cluster site. The 219-residue stretch at 81–299 (WTHGTLTVMI…EAWGYELGFR (219 aa)) folds into the Radical SAM core domain.

This sequence belongs to the radical SAM superfamily. Lipoyl synthase family. [4Fe-4S] cluster is required as a cofactor.

Its subcellular location is the cytoplasm. It carries out the reaction [[Fe-S] cluster scaffold protein carrying a second [4Fe-4S](2+) cluster] + N(6)-octanoyl-L-lysyl-[protein] + 2 oxidized [2Fe-2S]-[ferredoxin] + 2 S-adenosyl-L-methionine + 4 H(+) = [[Fe-S] cluster scaffold protein] + N(6)-[(R)-dihydrolipoyl]-L-lysyl-[protein] + 4 Fe(3+) + 2 hydrogen sulfide + 2 5'-deoxyadenosine + 2 L-methionine + 2 reduced [2Fe-2S]-[ferredoxin]. It participates in protein modification; protein lipoylation via endogenous pathway; protein N(6)-(lipoyl)lysine from octanoyl-[acyl-carrier-protein]: step 2/2. Its function is as follows. Catalyzes the radical-mediated insertion of two sulfur atoms into the C-6 and C-8 positions of the octanoyl moiety bound to the lipoyl domains of lipoate-dependent enzymes, thereby converting the octanoylated domains into lipoylated derivatives. This is Lipoyl synthase from Thermus thermophilus (strain ATCC 27634 / DSM 579 / HB8).